The sequence spans 278 residues: Elongation factor Ts (278 aa).

The interval 79 to 82 is involved in Mg(2+) ion dislocation from EF-Tu; that stretch reads TDFV.

It belongs to the EF-Ts family.

It is found in the cytoplasm. Functionally, associates with the EF-Tu.GDP complex and induces the exchange of GDP to GTP. It remains bound to the aminoacyl-tRNA.EF-Tu.GTP complex up to the GTP hydrolysis stage on the ribosome. This chain is Elongation factor Ts, found in Borrelia hermsii (strain HS1 / DAH).